Reading from the N-terminus, the 315-residue chain is Jacalin-related lectin 10 (315 aa).

The first 23 residues, Met1 to Ala23, serve as a signal peptide directing secretion. Jacalin-type lectin domains are found at residues Gln24 to Thr165 and Pro168 to Pro312.

The protein belongs to the jacalin lectin family.

The chain is Jacalin-related lectin 10 (JAL10) from Arabidopsis thaliana (Mouse-ear cress).